The sequence spans 327 residues: Ferrochelatase 2 (327 aa).

2 residues coordinate Fe cation: H201 and E282.

This sequence belongs to the ferrochelatase family.

The protein localises to the cytoplasm. The catalysed reaction is heme b + 2 H(+) = protoporphyrin IX + Fe(2+). The protein operates within porphyrin-containing compound metabolism; protoheme biosynthesis; protoheme from protoporphyrin-IX: step 1/1. Catalyzes the ferrous insertion into protoporphyrin IX. This chain is Ferrochelatase 2, found in Shewanella oneidensis (strain ATCC 700550 / JCM 31522 / CIP 106686 / LMG 19005 / NCIMB 14063 / MR-1).